Reading from the N-terminus, the 239-residue chain is mRNA turnover protein 4 homolog (239 aa).

The tract at residues Q216 to S239 is disordered. Acidic residues predominate over residues D221–S239. Phosphoserine is present on residues S225, S229, and S233.

This sequence belongs to the universal ribosomal protein uL10 family. In terms of assembly, associates with the pre-60S ribosomal particle. Interacts with MINAS-60 (product of an alternative open reading frame of RBM10).

The protein resides in the nucleus. The protein localises to the nucleolus. Its subcellular location is the cytoplasm. In terms of biological role, component of the ribosome assembly machinery. Nuclear paralog of the ribosomal protein P0, it binds pre-60S subunits at an early stage of assembly in the nucleolus, and is replaced by P0 in cytoplasmic pre-60S subunits and mature 80S ribosomes. This is mRNA turnover protein 4 homolog (MRTO4) from Bos taurus (Bovine).